The sequence spans 625 residues: Vacuolar-sorting receptor 7 (625 aa).

The signal sequence occupies residues 1 to 26; sequence MGLVNGRASLTFLLAALTIIAMVVEA. Over 27-564 the chain is Lumenal; it reads RFVVEKESIS…CIERYGSKTA (538 aa). Residues 58–166 enclose the PA domain; the sequence is DYGGFLIGSV…SFGDDLRQGF (109 aa). Asn-292, Asn-400, and Asn-432 each carry an N-linked (GlcNAc...) asparagine glycan. 2 consecutive EGF-like domains span residues 414–464 and 467–513; these read ETNE…TSCT and GPAR…LTCE. 7 disulfides stabilise this stretch: Cys-418/Cys-436, Cys-425/Cys-445, Cys-447/Cys-463, Cys-471/Cys-491, Cys-478/Cys-499, Cys-501/Cys-512, and Cys-542/Cys-555. Residues 514-556 enclose the EGF-like 3; calcium-binding domain; it reads DINECKERSVCQCSGCRCKNSWGGYKCSCSGDRLYINDQDTCI. Residues 565 to 585 traverse the membrane as a helical segment; the sequence is WWLTFLILAIVAVAGLAGYIF. Residues 586-625 lie on the Cytoplasmic side of the membrane; the sequence is YKYRFRSYMDSEIMTIMSQYMPLESQRAREVPSEAEPFTL. Residues 605–608 carry the Tyrosine-based internalization motif motif; it reads YMPL.

It belongs to the VSR (BP-80) family. As to expression, expressed at low levels in seedlings, roots, young leaves, flowers and siliques.

The protein localises to the golgi apparatus membrane. Its function is as follows. Vacuolar-sorting receptor (VSR) involved in clathrin-coated vesicles sorting from Golgi apparatus to vacuoles. This chain is Vacuolar-sorting receptor 7 (VSR7), found in Arabidopsis thaliana (Mouse-ear cress).